A 459-amino-acid polypeptide reads, in one-letter code: Exodeoxyribonuclease 7 large subunit (459 aa).

Belongs to the XseA family. Heterooligomer composed of large and small subunits.

It localises to the cytoplasm. The enzyme catalyses Exonucleolytic cleavage in either 5'- to 3'- or 3'- to 5'-direction to yield nucleoside 5'-phosphates.. Bidirectionally degrades single-stranded DNA into large acid-insoluble oligonucleotides, which are then degraded further into small acid-soluble oligonucleotides. This Pseudomonas aeruginosa (strain UCBPP-PA14) protein is Exodeoxyribonuclease 7 large subunit.